Reading from the N-terminus, the 233-residue chain is N-(5'-phosphoribosyl)anthranilate isomerase (233 aa).

Belongs to the TrpF family.

The catalysed reaction is N-(5-phospho-beta-D-ribosyl)anthranilate = 1-(2-carboxyphenylamino)-1-deoxy-D-ribulose 5-phosphate. Its pathway is amino-acid biosynthesis; L-tryptophan biosynthesis; L-tryptophan from chorismate: step 3/5. This Synechococcus sp. (strain JA-2-3B'a(2-13)) (Cyanobacteria bacterium Yellowstone B-Prime) protein is N-(5'-phosphoribosyl)anthranilate isomerase.